Here is a 413-residue protein sequence, read N- to C-terminus: MQQIQKVKAREIFNSRGWPTIEVEVTTSCGRVGCAIAPSGASKGVLEACELLDGDKARLSGRGVLRAVENVHTIIAPALMGKSVAAQAEIDSLLIQLDGTTNKSVLGANAIVAVSLAVAKANASVRGVPLCIVFHNLLTSEGDDFVYVPPVPMLNVINGGVHADNRLAIQEFMICPVGRRSFRESMEKAADVFHRLKGLLKQYGKSTNVGDEGGFAPDLSSTEETLGLLSEAIGDSKESVKIALDAASSTFYKDGKYSIDGKLLNVNEMVDFYAAIIEKYDIVSIEDPLYESDWESWQVMTRKLSDKIHIVGDDIFVTNPKIIKKGIKTGVANAVLVKINQVGTVTETIESIKLARKAGYKVVISHRSGETEDLSIAHLAVACGGAFLKAGSLSRSERVAKYNEVLRLEEVFV.

A (2R)-2-phosphoglycerate-binding site is contributed by Gln-170. Glu-212 functions as the Proton donor in the catalytic mechanism. Mg(2+) is bound by residues Asp-245, Glu-286, and Asp-313. Lys-338, Arg-367, Ser-368, and Lys-389 together coordinate (2R)-2-phosphoglycerate. Lys-338 (proton acceptor) is an active-site residue.

This sequence belongs to the enolase family. It depends on Mg(2+) as a cofactor.

The protein resides in the cytoplasm. It is found in the secreted. Its subcellular location is the cell surface. The catalysed reaction is (2R)-2-phosphoglycerate = phosphoenolpyruvate + H2O. Its pathway is carbohydrate degradation; glycolysis; pyruvate from D-glyceraldehyde 3-phosphate: step 4/5. Catalyzes the reversible conversion of 2-phosphoglycerate (2-PG) into phosphoenolpyruvate (PEP). It is essential for the degradation of carbohydrates via glycolysis. This is Enolase from Neorickettsia sennetsu (strain ATCC VR-367 / Miyayama) (Ehrlichia sennetsu).